Reading from the N-terminus, the 388-residue chain is Queuine tRNA-ribosyltransferase (388 aa).

The active-site Proton acceptor is the aspartate 91. Substrate contacts are provided by residues 91 to 95 (DSGGY), aspartate 145, glutamine 190, and glycine 217. The RNA binding stretch occupies residues 248-254 (GVGAPED). Aspartate 267 serves as the catalytic Nucleophile. The RNA binding; important for wobble base 34 recognition stretch occupies residues 272–276 (TRLAR). Residues cysteine 305, cysteine 307, cysteine 310, and histidine 336 each coordinate Zn(2+).

Belongs to the queuine tRNA-ribosyltransferase family. As to quaternary structure, homodimer. Within each dimer, one monomer is responsible for RNA recognition and catalysis, while the other monomer binds to the replacement base PreQ1. Zn(2+) is required as a cofactor.

It carries out the reaction 7-aminomethyl-7-carbaguanine + guanosine(34) in tRNA = 7-aminomethyl-7-carbaguanosine(34) in tRNA + guanine. It participates in tRNA modification; tRNA-queuosine biosynthesis. In terms of biological role, catalyzes the base-exchange of a guanine (G) residue with the queuine precursor 7-aminomethyl-7-deazaguanine (PreQ1) at position 34 (anticodon wobble position) in tRNAs with GU(N) anticodons (tRNA-Asp, -Asn, -His and -Tyr). Catalysis occurs through a double-displacement mechanism. The nucleophile active site attacks the C1' of nucleotide 34 to detach the guanine base from the RNA, forming a covalent enzyme-RNA intermediate. The proton acceptor active site deprotonates the incoming PreQ1, allowing a nucleophilic attack on the C1' of the ribose to form the product. After dissociation, two additional enzymatic reactions on the tRNA convert PreQ1 to queuine (Q), resulting in the hypermodified nucleoside queuosine (7-(((4,5-cis-dihydroxy-2-cyclopenten-1-yl)amino)methyl)-7-deazaguanosine). This chain is Queuine tRNA-ribosyltransferase, found in Dictyoglomus turgidum (strain DSM 6724 / Z-1310).